Reading from the N-terminus, the 233-residue chain is Large ribosomal subunit protein uL1 (233 aa).

It belongs to the universal ribosomal protein uL1 family. In terms of assembly, part of the 50S ribosomal subunit.

Its function is as follows. Binds directly to 23S rRNA. The L1 stalk is quite mobile in the ribosome, and is involved in E site tRNA release. Protein L1 is also a translational repressor protein, it controls the translation of the L11 operon by binding to its mRNA. The sequence is that of Large ribosomal subunit protein uL1 from Deinococcus deserti (strain DSM 17065 / CIP 109153 / LMG 22923 / VCD115).